Consider the following 155-residue polypeptide: Cytochrome c-type biogenesis protein CcmE (155 aa).

Residues 1–7 (MTRKQKR) lie on the Cytoplasmic side of the membrane. A helical; Signal-anchor for type II membrane protein membrane pass occupies residues 8-28 (LVVIAGGMSFILAAVLLVMFA). At 29–155 (FSQSVAYFYM…GKGQEAKATP (127 aa)) the chain is on the periplasmic side. 2 residues coordinate heme: histidine 124 and tyrosine 128.

This sequence belongs to the CcmE/CycJ family.

The protein localises to the cell inner membrane. Heme chaperone required for the biogenesis of c-type cytochromes. Transiently binds heme delivered by CcmC and transfers the heme to apo-cytochromes in a process facilitated by CcmF and CcmH. The sequence is that of Cytochrome c-type biogenesis protein CcmE from Rhizobium etli (strain ATCC 51251 / DSM 11541 / JCM 21823 / NBRC 15573 / CFN 42).